The following is a 95-amino-acid chain: UPF0235 protein Adeh_1087 (95 aa).

Belongs to the UPF0235 family.

This chain is UPF0235 protein Adeh_1087, found in Anaeromyxobacter dehalogenans (strain 2CP-C).